The chain runs to 328 residues: Phenylalanine--tRNA ligase alpha subunit (328 aa).

Position 245 (Glu245) interacts with Mg(2+).

This sequence belongs to the class-II aminoacyl-tRNA synthetase family. Phe-tRNA synthetase alpha subunit type 1 subfamily. As to quaternary structure, tetramer of two alpha and two beta subunits. It depends on Mg(2+) as a cofactor.

Its subcellular location is the cytoplasm. It catalyses the reaction tRNA(Phe) + L-phenylalanine + ATP = L-phenylalanyl-tRNA(Phe) + AMP + diphosphate + H(+). The protein is Phenylalanine--tRNA ligase alpha subunit (pheS) of Helicobacter pylori (strain ATCC 700392 / 26695) (Campylobacter pylori).